The primary structure comprises 351 residues: MLYSLVKKYLFSLDAEDAHEKVCKILRMLSSSPFLCNLIDSQWGYQNPKLENEILGLHFPNPLGLAAGFDKNASMLRALMAFGFGYLEAGTLTNEAQVGNERPRLFRHIEEESLQNAMGFNNYGAILGVRSFKRFAPYKTPIGINLGKNKHIEQAHALEDYKAVLSKCLNIGDYYTFNLSSPNTPNLRDLQNKAFVHELFCMAKEMTHKPLFLKIAPDLETDDMLEIVNSAIGAGAHGIIATNTTIDKSLVFAPKEMGGLSGKCLTKKSREIFKELAKAFFNKSVLVSVGGISDAKEAYERIKMGASLLQIYSAFIYNGPNLCQNILKDLVKLLQKDGFLSVKEAIGADLR.

Residues 67–71 (AGFDK) and threonine 91 contribute to the FMN site. Lysine 71 contributes to the substrate binding site. 116–120 (NAMGF) is a substrate binding site. The FMN site is built by asparagine 145 and asparagine 178. Asparagine 178 lines the substrate pocket. Serine 181 serves as the catalytic Nucleophile. Residue asparagine 183 participates in substrate binding. Residues lysine 214 and threonine 242 each contribute to the FMN site. Substrate is bound at residue 243-244 (NT). Residues glycine 262, glycine 291, and 312–313 (YS) each bind FMN.

The protein belongs to the dihydroorotate dehydrogenase family. Type 2 subfamily. Monomer. It depends on FMN as a cofactor.

The protein resides in the cell membrane. The catalysed reaction is (S)-dihydroorotate + a quinone = orotate + a quinol. It functions in the pathway pyrimidine metabolism; UMP biosynthesis via de novo pathway; orotate from (S)-dihydroorotate (quinone route): step 1/1. Catalyzes the conversion of dihydroorotate to orotate with quinone as electron acceptor. The polypeptide is Dihydroorotate dehydrogenase (quinone) (pyrD) (Helicobacter pylori (strain ATCC 700392 / 26695) (Campylobacter pylori)).